A 329-amino-acid chain; its full sequence is MQGSVTEFLKPRLVDIEQVSSTHAKVTLEPLERGFGHTLGNALRRILLSSMPGCAVTEVEIDGVLHEYSTKEGVQEDILEILLNLKGLAVRVQGKDEVILTLNKSGIGPVTAADITHDGDVEIVKPQHVICHLTDENAAISMRIKVQRGRGYVPASARIHSEEDERPIGRLLVDACYSPVERIAYNVEAARVEQRTDLDKLVIEMETNGTIDPEEAIRRAATILAEQLEAFVDLRDVRQPEVKEEKPEFDPILLRPVDDLELTVRSANCLKAEAIHYIGDLVQRTEVELLKTPNLGKKSLTEIKDVLASRGLSLGMRLENWPPASIADE.

Residues 1–235 are alpha N-terminal domain (alpha-NTD); sequence MQGSVTEFLK…EQLEAFVDLR (235 aa). The interval 249 to 329 is alpha C-terminal domain (alpha-CTD); the sequence is FDPILLRPVD…NWPPASIADE (81 aa).

This sequence belongs to the RNA polymerase alpha chain family. Homodimer. The RNAP catalytic core consists of 2 alpha, 1 beta, 1 beta' and 1 omega subunit. When a sigma factor is associated with the core the holoenzyme is formed, which can initiate transcription.

It carries out the reaction RNA(n) + a ribonucleoside 5'-triphosphate = RNA(n+1) + diphosphate. Its function is as follows. DNA-dependent RNA polymerase catalyzes the transcription of DNA into RNA using the four ribonucleoside triphosphates as substrates. The polypeptide is DNA-directed RNA polymerase subunit alpha (Enterobacter sp. (strain 638)).